The primary structure comprises 493 residues: Transcript termination protein OPG145 (493 aa).

The Helicase ATP-binding domain occupies 100–256 (MIESKRPLYI…NSIINIAKLS (157 aa)). 113–120 (LACGFGKT) provides a ligand contact to ATP. The DESH box motif lies at 206-209 (DESH). The Helicase C-terminal domain maps to 309–456 (ILDTLVEEFK…IISLSVDKLG (148 aa)).

Belongs to the helicase family. Poxviruses subfamily. Interacts with OPG087. Might be part of a transcription complex composed at least of OPG087, OPG110, and OPG145.

It is found in the virion. In terms of biological role, DNA helicase which seems to act as a postreplicative transcription termination factor. Involved in ATP-dependent release of nascent RNA. Forms a stable complex with single-stranded DNA, and to a lesser extent RNA. The polypeptide is Transcript termination protein OPG145 (OPG145) (Homo sapiens (Human)).